A 368-amino-acid chain; its full sequence is Glutamine synthetase root isozyme 2 (368 aa).

The 81-residue stretch at 19-99 (IIAEYIWVGG…VMCDCYEPNG (81 aa)) folds into the GS beta-grasp domain. The segment at 38 to 66 (RTLSGPVDDPSKLPKWNFDGSSTGQAPGD) is disordered. The region spanning 106–368 (KRHGAAKIFS…NGDGKGAAAP (263 aa)) is the GS catalytic domain.

It belongs to the glutamine synthetase family. As to quaternary structure, homooctamer. Found mainly in the vascular tissues of seedling roots.

Its subcellular location is the cytoplasm. The catalysed reaction is L-glutamate + NH4(+) + ATP = L-glutamine + ADP + phosphate + H(+). Its function is as follows. Plays a role in the flow of nitrogen into nitrogenous organic compounds. In Zea mays (Maize), this protein is Glutamine synthetase root isozyme 2 (GLN2).